Here is a 294-residue protein sequence, read N- to C-terminus: Dof zinc finger protein DOF4.1 (294 aa).

The Dof-type zinc-finger motif lies at 68–122 (RNCPRCNSSNTKFCYYNNYSLAQPRYLCKSCRRYWTEGGSLRNVPVGGGSRKNKK). The Zn(2+) site is built by cysteine 70, cysteine 73, cysteine 95, and cysteine 98. Disordered stretches follow at residues 109–178 (RNVP…DKRA) and 247–294 (MYPY…GPTW). 2 stretches are compositionally biased toward polar residues: residues 126–136 (PNSSTSSSTKN) and 157–173 (KTHQ…SSPM). Residues 251-273 (GDHEDRQQHHHVRHDDGNKKREG) show a composition bias toward basic and acidic residues. Residues 284-294 (ILGGDSGGPTW) are compositionally biased toward gly residues.

Its subcellular location is the nucleus. In terms of biological role, transcription factor that binds specifically to a 5'-AA[AG]G-3' consensus core sequence. The polypeptide is Dof zinc finger protein DOF4.1 (DOF4.1) (Arabidopsis thaliana (Mouse-ear cress)).